Reading from the N-terminus, the 399-residue chain is 1-deoxy-D-xylulose 5-phosphate reductoisomerase (399 aa).

Threonine 11, glycine 12, serine 13, isoleucine 14, glycine 37, asparagine 39, and asparagine 125 together coordinate NADPH. Lysine 126 serves as a coordination point for 1-deoxy-D-xylulose 5-phosphate. Residue glutamate 127 participates in NADPH binding. Position 151 (aspartate 151) interacts with Mn(2+). Residues serine 152, glutamate 153, serine 177, and histidine 200 each contribute to the 1-deoxy-D-xylulose 5-phosphate site. Mn(2+) is bound at residue glutamate 153. Residue glycine 206 participates in NADPH binding. Serine 213, asparagine 218, lysine 219, and glutamate 222 together coordinate 1-deoxy-D-xylulose 5-phosphate. Glutamate 222 contacts Mn(2+).

This sequence belongs to the DXR family. Mg(2+) is required as a cofactor. It depends on Mn(2+) as a cofactor.

The catalysed reaction is 2-C-methyl-D-erythritol 4-phosphate + NADP(+) = 1-deoxy-D-xylulose 5-phosphate + NADPH + H(+). The protein operates within isoprenoid biosynthesis; isopentenyl diphosphate biosynthesis via DXP pathway; isopentenyl diphosphate from 1-deoxy-D-xylulose 5-phosphate: step 1/6. Its function is as follows. Catalyzes the NADPH-dependent rearrangement and reduction of 1-deoxy-D-xylulose-5-phosphate (DXP) to 2-C-methyl-D-erythritol 4-phosphate (MEP). This is 1-deoxy-D-xylulose 5-phosphate reductoisomerase from Nostoc sp. (strain PCC 7120 / SAG 25.82 / UTEX 2576).